The sequence spans 844 residues: 3',5'-cyclic-AMP phosphodiesterase 4A (844 aa).

The disordered stretch occupies residues 1 to 124 (MEPPAAPSER…RSPLDSQASP (124 aa)). S13 carries the phosphoserine modification. Low complexity predominate over residues 36-46 (QPRTPIRIQQR). The span at 51 to 78 (SAERSETERSPHRPIERADAVDTGDRPG) shows a compositional bias: basic and acidic residues. The span at 82-91 (TRMSWPSSFH) shows a compositional bias: polar residues. Phosphoserine; by MAPKAPK2 is present on S147. Phosphoserine is present on residues S152, S160, and S204. The tract at residues 296–317 (PSPTPRQRAFQQPPPSVLRQSQ) is disordered. At S333 the chain carries Phosphoserine. The PDEase domain occupies 343–672 (VKTDQEDLLA…DWYHSAIRQS (330 aa)). Residue K344 forms a Glycyl lysine isopeptide (Lys-Gly) (interchain with G-Cter in SUMO) linkage. The active-site Proton donor is H419. H419 is a 3',5'-cyclic AMP binding site. Positions 419 and 423 each coordinate AMP. The Zn(2+) site is built by H423, H459, D460, and D577. Residues D460, D577, Q628, and F631 each contribute to the AMP site. D460 serves as a coordination point for Mg(2+). Residue D460 coordinates Mn(2+). 3',5'-cyclic AMP-binding residues include Q628 and F631. 2 disordered regions span residues 668–690 (AIRQ…PSLP) and 818–844 (SACS…GDPA). Phosphoserine is present on residues S672 and S674. Polar residues predominate over residues 820-830 (CSGTSGDNSAI).

Belongs to the cyclic nucleotide phosphodiesterase family. PDE4 subfamily. In terms of assembly, interacts with LYN (via SH3 domain). Interacts with ARRB2. The cofactor is Zn(2+). Mg(2+) serves as cofactor. Mn(2+) is required as a cofactor. Post-translationally, phosphorylated by MAPKAPK2 at Ser-147; it counteracts PKA-induced activation of PDE4A and modulates intracellular cAMP levels. Likely involved in cellular desensitization to cAMP signaling. Proteolytically cleaved by CASP3. Isoform 2 is testis specific.

It is found in the cytoplasm. It localises to the cytosol. The protein localises to the membrane. The catalysed reaction is 3',5'-cyclic AMP + H2O = AMP + H(+). Its pathway is purine metabolism; 3',5'-cyclic AMP degradation; AMP from 3',5'-cyclic AMP: step 1/1. With respect to regulation, inhibited by rolipram. Hydrolyzes the second messenger 3',5'-cyclic AMP (cAMP), which is a key regulator of many important physiological processes. Functionally, efficiently hydrolyzes cAMP. The protein is 3',5'-cyclic-AMP phosphodiesterase 4A (Pde4a) of Rattus norvegicus (Rat).